Reading from the N-terminus, the 54-residue chain is UPF0391 membrane protein Rfer_1875 (54 aa).

Helical transmembrane passes span 5–25 and 30–50; these read AVVFFVIALIAALFGFGGIAA and IGKILFIVFAILAVASFLFGL.

The protein belongs to the UPF0391 family.

The protein resides in the cell membrane. This Albidiferax ferrireducens (strain ATCC BAA-621 / DSM 15236 / T118) (Rhodoferax ferrireducens) protein is UPF0391 membrane protein Rfer_1875.